The chain runs to 247 residues: Segregation and condensation protein A (247 aa).

Belongs to the ScpA family. As to quaternary structure, component of a cohesin-like complex composed of ScpA, ScpB and the Smc homodimer, in which ScpA and ScpB bind to the head domain of Smc. The presence of the three proteins is required for the association of the complex with DNA.

The protein localises to the cytoplasm. Participates in chromosomal partition during cell division. May act via the formation of a condensin-like complex containing Smc and ScpB that pull DNA away from mid-cell into both cell halves. The sequence is that of Segregation and condensation protein A from Bacillus cereus (strain ATCC 10987 / NRS 248).